We begin with the raw amino-acid sequence, 565 residues long: Probable peptidoglycan D,D-transpeptidase PbpC (565 aa).

A helical transmembrane segment spans residues 10–30 (FILVVTLFVLASLAVSGRLVY). The Acyl-ester intermediate role is filled by serine 289.

Belongs to the transpeptidase family. FtsI subfamily.

Its subcellular location is the cell inner membrane. It carries out the reaction Preferential cleavage: (Ac)2-L-Lys-D-Ala-|-D-Ala. Also transpeptidation of peptidyl-alanyl moieties that are N-acyl substituents of D-alanine.. It functions in the pathway cell wall biogenesis; peptidoglycan biosynthesis. In terms of biological role, catalyzes cross-linking of the peptidoglycan cell wall at the division septum. Binds penicillin. This chain is Probable peptidoglycan D,D-transpeptidase PbpC, found in Pseudomonas aeruginosa (strain ATCC 15692 / DSM 22644 / CIP 104116 / JCM 14847 / LMG 12228 / 1C / PRS 101 / PAO1).